Reading from the N-terminus, the 171-residue chain is uncharacterized protein (171 aa).

This is an uncharacterized protein from Thermofilum pendens.